We begin with the raw amino-acid sequence, 437 residues long: tRNA-2-methylthio-N(6)-dimethylallyladenosine synthase (437 aa).

The 115-residue stretch at 1-115 folds into the MTTase N-terminal domain; that stretch reads MKVYIETMGC…ISQVIHKEKA (115 aa). 6 residues coordinate [4Fe-4S] cluster: Cys-10, Cys-46, Cys-78, Cys-148, Cys-152, and Cys-155. A Radical SAM core domain is found at 134–367; that stretch reads KKAQIRSLLN…QNRHKEILEE (234 aa). One can recognise a TRAM domain in the interval 370-436; it reads KLEVGKTHVV…KGRLIAAIKG (67 aa).

The protein belongs to the methylthiotransferase family. MiaB subfamily. In terms of assembly, monomer. Requires [4Fe-4S] cluster as cofactor.

It localises to the cytoplasm. The catalysed reaction is N(6)-dimethylallyladenosine(37) in tRNA + (sulfur carrier)-SH + AH2 + 2 S-adenosyl-L-methionine = 2-methylsulfanyl-N(6)-dimethylallyladenosine(37) in tRNA + (sulfur carrier)-H + 5'-deoxyadenosine + L-methionine + A + S-adenosyl-L-homocysteine + 2 H(+). Functionally, catalyzes the methylthiolation of N6-(dimethylallyl)adenosine (i(6)A), leading to the formation of 2-methylthio-N6-(dimethylallyl)adenosine (ms(2)i(6)A) at position 37 in tRNAs that read codons beginning with uridine. This Helicobacter pylori (strain P12) protein is tRNA-2-methylthio-N(6)-dimethylallyladenosine synthase.